The chain runs to 150 residues: Single-stranded DNA-binding protein 1 (150 aa).

An SSB domain is found at 1–104 (MINNVVLVGR…VVADTFQMLE (104 aa)). Positions 103–120 (LESNKTQGQQTSKPQAQN) are enriched in polar residues. The tract at residues 103–150 (LESNKTQGQQTSKPQAQNKKPQAPDPFKAPAADPFAGGTEISDDDLPF) is disordered. Residues 121–138 (KKPQAPDPFKAPAADPFA) show a composition bias toward low complexity. Positions 145–150 (DDDLPF) match the Important for interaction with partner proteins motif.

In terms of assembly, homotetramer.

Functionally, plays an important role in DNA replication, recombination and repair. Binds to ssDNA and to an array of partner proteins to recruit them to their sites of action during DNA metabolism. This Lactococcus lactis subsp. lactis (strain IL1403) (Streptococcus lactis) protein is Single-stranded DNA-binding protein 1 (ssb1).